The primary structure comprises 208 residues: Putative dioxygenase RC0543 (208 aa).

The protein belongs to the intradiol ring-cleavage dioxygenase family.

The protein is Putative dioxygenase RC0543 of Rickettsia conorii (strain ATCC VR-613 / Malish 7).